The sequence spans 85 residues: Putative membrane protein insertion efficiency factor (85 aa).

This sequence belongs to the UPF0161 family.

It localises to the cell inner membrane. Functionally, could be involved in insertion of integral membrane proteins into the membrane. The sequence is that of Putative membrane protein insertion efficiency factor from Fervidobacterium nodosum (strain ATCC 35602 / DSM 5306 / Rt17-B1).